The primary structure comprises 393 residues: 8-amino-7-oxononanoate synthase (393 aa).

Gly107–Phe108 lines the pyridoxal 5'-phosphate pocket. Position 132 (His132) interacts with substrate. Pyridoxal 5'-phosphate is bound by residues Ser180, Asp205–His208, and Thr236–Lys239. N6-(pyridoxal phosphate)lysine is present on Lys239. Thr353 is a substrate binding site.

It belongs to the class-II pyridoxal-phosphate-dependent aminotransferase family. BioF subfamily. As to quaternary structure, homodimer. Pyridoxal 5'-phosphate is required as a cofactor.

The enzyme catalyses 6-carboxyhexanoyl-[ACP] + L-alanine + H(+) = (8S)-8-amino-7-oxononanoate + holo-[ACP] + CO2. The protein operates within cofactor biosynthesis; biotin biosynthesis. Catalyzes the decarboxylative condensation of pimeloyl-[acyl-carrier protein] and L-alanine to produce 8-amino-7-oxononanoate (AON), [acyl-carrier protein], and carbon dioxide. The chain is 8-amino-7-oxononanoate synthase from Coprothermobacter proteolyticus (strain ATCC 35245 / DSM 5265 / OCM 4 / BT).